The sequence spans 165 residues: MEEIFKIGQIVNTHGIKGEVKVYPLTEDVNKFKKLKTVLIDGEHRNIQSVKFQKDRVILKIEGIDTMNDAETYKQKYIEIFRSNAPELEADTHYIVDLIGCMVYDADNMELGKIFDVISTPSNDVYWIKQPKELLIPVLKDIVLDIDIENKKIVVKPVRQWQDED.

The PRC barrel domain occupies 89–161 (EADTHYIVDL…KIVVKPVRQW (73 aa)).

This sequence belongs to the RimM family. As to quaternary structure, binds ribosomal protein uS19.

The protein resides in the cytoplasm. An accessory protein needed during the final step in the assembly of 30S ribosomal subunit, possibly for assembly of the head region. Essential for efficient processing of 16S rRNA. May be needed both before and after RbfA during the maturation of 16S rRNA. It has affinity for free ribosomal 30S subunits but not for 70S ribosomes. The protein is Ribosome maturation factor RimM of Clostridium botulinum (strain Alaska E43 / Type E3).